A 292-amino-acid chain; its full sequence is NAD kinase (292 aa).

Asp73 (proton acceptor) is an active-site residue. NAD(+)-binding positions include 73 to 74 (DG), 147 to 148 (NE), His158, Arg175, Asp177, 188 to 193 (TAYSLS), and Gln247.

The protein belongs to the NAD kinase family. A divalent metal cation is required as a cofactor.

It localises to the cytoplasm. It carries out the reaction NAD(+) + ATP = ADP + NADP(+) + H(+). Functionally, involved in the regulation of the intracellular balance of NAD and NADP, and is a key enzyme in the biosynthesis of NADP. Catalyzes specifically the phosphorylation on 2'-hydroxyl of the adenosine moiety of NAD to yield NADP. The protein is NAD kinase of Escherichia coli (strain UTI89 / UPEC).